Reading from the N-terminus, the 206-residue chain is Max dimerization protein 3 (206 aa).

The interval 8–25 (IQVLLQAAEFLERREREA) is interaction with SIN3A and SIN3B. The bHLH domain occupies 57-109 (SGRHVHNELEKRRRAQLKRCLEQLRQQMPLGVDHTRYTTLSLLRGARMHIQKL).

In terms of assembly, efficient DNA binding requires dimerization with another bHLH protein. Binds DNA as a heterodimer with MAX. Interacts with SIN3A AND SIN3B. Interacts with RNF17.

It is found in the nucleus. In terms of biological role, transcriptional repressor. Binds with MAX to form a sequence-specific DNA-binding protein complex which recognizes the core sequence 5'-CAC[GA]TG-3'. Antagonizes MYC transcriptional activity by competing for MAX and suppresses MYC dependent cell transformation. The protein is Max dimerization protein 3 (Mxd3) of Rattus norvegicus (Rat).